We begin with the raw amino-acid sequence, 203 residues long: uncharacterized protein (203 aa).

This is an uncharacterized protein from Aquifex aeolicus (strain VF5).